A 56-amino-acid chain; its full sequence is Large ribosomal subunit protein bL32 (56 aa).

Residues 1–56 (MAVQQNRKTRSKRGMRRSHDALSAPTLSQDKETGTTHRRHHVAPDGFYRGRKVVDV) are disordered. Over residues 7 to 16 (RKTRSKRGMR) the composition is skewed to basic residues.

This sequence belongs to the bacterial ribosomal protein bL32 family.

The chain is Large ribosomal subunit protein bL32 from Chromohalobacter salexigens (strain ATCC BAA-138 / DSM 3043 / CIP 106854 / NCIMB 13768 / 1H11).